The chain runs to 938 residues: MPAVSKGEGMRGLAVFISDIRNCKSKEAEIKRINKELANIRSKFKGDKALDGYSKKKYVCKLLFIFLLGHDIDFGHMEAVNLLSSNRYTEKQIGYLFISVLVNSNSELIRLINNAIKNDLASRNPTFMGLALHCIANVGSREMAEAFAGEIPKILVAGDTMDSVKQSAALCLLRLYRTSPDLVPMGDWTSRVVHLLNDQHLGVVTAATSLITTLAQKNPEEFKTSVSLAVSRLSRIVTSASTDLQDYTYYFVPAPWLSVKLLRLLQCYPPPDPAVRGRLTECLETILNKAQEPPKSKKVQHSNAKNAVLFEAISLIIHHDSEPNLLVRACNQLGQFLQHRETNLRYLALESMCTLASSEFSHEAVKTHIETVINALKTERDVSVRQRAVDLLYAMCDRSNAQQIVAEMLSYLETADYSIREEIVLKVAILAEKYAVDYTWYVDTILNLIRIAGDYVSEEVWYRVIQIVINRDDVQGYAAKTVFEALQAPACHENLVKVGGYILGEFGNLIAGDPRSSPLIQFNLLHSKFHLCSVPTRALLLSTYIKFVNLFPEVKATIQDVLRSDSQLKNADVELQQRAVEYLRLSTVASTDILATVLEEMPPFPERESSILAKLKKKKGPSTVTDLEETKRERSIDVNGGPEPVPASTSAASTPSPSADLLGLGAVPPAPTGPPPSSGGGLLVDVFSDSASAVAPLAPGSEDNFARFVCKNNGVLFENQLLQIGLKSEFRQNLGRMFIFYGNKTSTQFLNFTPTLICADDLQTNLNLQTKPVDPTVDGGAQVQQVINIECISDFTEAPVLNIQFRYGGTFQNVSVKLPITLNKFFQPTEMASQDFFQRWKQLSNPQQEVQNIFKAKHPMDTEITKAKIIGFGSALLEEVDPNPANFVGAGIIHTKTTQIGCLLRLEPNLQAQMYRLTLRTSKDTVSQRLCELLSEQF.

A 1,2-diacyl-sn-glycero-3-phospho-(1D-myo-inositol-3,4,5-trisphosphate)-binding positions include arginine 11 to glycine 12, lysine 43, tyrosine 53, and lysine 57 to lysine 61. The tract at residues leucine 615–glycine 681 is disordered. Over residues proline 646–valine 667 the composition is skewed to low complexity. Pro residues predominate over residues proline 668–serine 677.

This sequence belongs to the adaptor complexes large subunit family. As to quaternary structure, adaptor protein complex 2 (AP-2) is a heterotetramer composed of two large adaptins (alpha-type subunit AP2A1 or AP2A2 and beta-type subunit AP2B1), a medium adaptin (mu-type subunit AP2M1) and a small adaptin (sigma-type subunit AP2S1). Interacts with clathrin. Binds EPN1, EPS15, AMPH, SNAP91 and BIN1. Interacts with HIP1. Interacts with DGKD. Interacts with DENND1A, DENND1B and DENND1C. Interacts with FCHO1 and DAB2. Interacts with ATAT1; this interaction is required for efficient alpha-tubulin acetylation by ATAT1. Interacts with KIAA1107. Together with AP2B1 and AP2M1, it interacts with ADAM10; this interaction facilitates ADAM10 endocytosis from the plasma membrane during long-term potentiation in hippocampal neurons. Interacts with CLN3 (via dileucine motif). Interacts with ABCB11; this interaction regulates cell membrane expression of ABCB11 through its internalization in a clathrin-dependent manner and its subsequent degradation. Interacts with Cacfd1. Interacts with DNAJC6. Widely expressed.

The protein resides in the cell membrane. The protein localises to the membrane. Its subcellular location is the coated pit. Component of the adaptor protein complex 2 (AP-2). Adaptor protein complexes function in protein transport via transport vesicles in different membrane traffic pathways. Adaptor protein complexes are vesicle coat components and appear to be involved in cargo selection and vesicle formation. AP-2 is involved in clathrin-dependent endocytosis in which cargo proteins are incorporated into vesicles surrounded by clathrin (clathrin-coated vesicles, CCVs) which are destined for fusion with the early endosome. The clathrin lattice serves as a mechanical scaffold but is itself unable to bind directly to membrane components. Clathrin-associated adaptor protein (AP) complexes which can bind directly to both the clathrin lattice and to the lipid and protein components of membranes are considered to be the major clathrin adaptors contributing the CCV formation. AP-2 also serves as a cargo receptor to selectively sort the membrane proteins involved in receptor-mediated endocytosis. AP-2 seems to play a role in the recycling of synaptic vesicle membranes from the presynaptic surface. AP-2 recognizes Y-X-X-[FILMV] (Y-X-X-Phi) and [ED]-X-X-X-L-[LI] endocytosis signal motifs within the cytosolic tails of transmembrane cargo molecules. AP-2 may also play a role in maintaining normal post-endocytic trafficking through the ARF6-regulated, non-clathrin pathway. During long-term potentiation in hippocampal neurons, AP-2 is responsible for the endocytosis of ADAM10. The AP-2 alpha subunit binds polyphosphoinositide-containing lipids, positioning AP-2 on the membrane. The AP-2 alpha subunit acts via its C-terminal appendage domain as a scaffolding platform for endocytic accessory proteins. The AP-2 alpha and AP-2 sigma subunits are thought to contribute to the recognition of the [ED]-X-X-X-L-[LI] motif. This Rattus norvegicus (Rat) protein is AP-2 complex subunit alpha-2.